Reading from the N-terminus, the 926-residue chain is Nitrate reductase [NADH] (926 aa).

The segment at 1-85 is disordered; sequence MAASVDRQYH…SDSEEDDDEN (85 aa). Residues 36 to 46 are compositionally biased toward polar residues; the sequence is YTFSNPPSSNG. Low complexity predominate over residues 58–73; sequence DNNSNSNNGSNNNNNR. A Mo-molybdopterin-binding site is contributed by Cys204. A Cytochrome b5 heme-binding domain is found at 551–626; sequence SKMYSMSEVK…LEDFRIGELI (76 aa). His586 and His609 together coordinate heme. The region spanning 670-782 is the FAD-binding FR-type domain; that stretch reads RVKIPCKLIE…KGPLGHIEYL (113 aa). FAD contacts are provided by residues 722–725, 739–743, Phe744, Phe751, 756–758, and Thr809; these read RAYT, VVKVY, and VMS.

This sequence belongs to the nitrate reductase family. As to quaternary structure, homodimer. Requires FAD as cofactor. The cofactor is heme. Mo-molybdopterin serves as cofactor.

It carries out the reaction nitrite + NAD(+) + H2O = nitrate + NADH + H(+). Nitrate reductase is a key enzyme involved in the first step of nitrate assimilation in plants, fungi and bacteria. In Spinacia oleracea (Spinach), this protein is Nitrate reductase [NADH] (NIA).